A 56-amino-acid polypeptide reads, in one-letter code: Large ribosomal subunit protein bL32A (56 aa).

The tract at residues 1-56 (MAVPARRTSKAKKNKRRTHKGLTAPGLSRDSETGEYRMSHRISPDGTYKGRTIIEK) is disordered. A compositionally biased stretch (basic residues) spans 7 to 20 (RTSKAKKNKRRTHK). Over residues 29-38 (RDSETGEYRM) the composition is skewed to basic and acidic residues.

This sequence belongs to the bacterial ribosomal protein bL32 family.

The sequence is that of Large ribosomal subunit protein bL32A (rpmF1) from Listeria innocua serovar 6a (strain ATCC BAA-680 / CLIP 11262).